The chain runs to 280 residues: Coiled-coil domain-containing protein 106 (280 aa).

Residues 63–101 adopt a coiled-coil conformation; the sequence is TQLHMALERNSWLQKRIEDLEEERDFLRCQLDKFISSAR. Residues 103-121 show a composition bias toward basic and acidic residues; it reads EAEDHCRMKPGPRRMEGDS. A disordered region spans residues 103–176; it reads EAEDHCRMKP…KPKARERQRV (74 aa). Phosphoserine is present on Ser-130. Residues 133-146 show a composition bias toward low complexity; it reads ESAASSLSGASEEG. Residues 151–164 carry the Bipartite nuclear localization signal motif; it reads RRRQKQKGGASRRR. Positions 152-168 are enriched in basic residues; it reads RRQKQKGGASRRRFGKP.

Interacts with p53/TP53.

The protein localises to the nucleus. Promotes the degradation of p53/TP53 protein and inhibits its transactivity. In Homo sapiens (Human), this protein is Coiled-coil domain-containing protein 106 (CCDC106).